The sequence spans 375 residues: Queuine tRNA-ribosyltransferase (375 aa).

Aspartate 94 serves as the catalytic Proton acceptor. Residues aspartate 94–phenylalanine 98, aspartate 148, glutamine 191, and glycine 218 each bind substrate. The segment at glycine 249–aspartate 255 is RNA binding. Aspartate 268 functions as the Nucleophile in the catalytic mechanism. The RNA binding; important for wobble base 34 recognition stretch occupies residues threonine 273–arginine 277. Residues cysteine 306, cysteine 308, cysteine 311, and histidine 337 each coordinate Zn(2+).

It belongs to the queuine tRNA-ribosyltransferase family. As to quaternary structure, homodimer. Within each dimer, one monomer is responsible for RNA recognition and catalysis, while the other monomer binds to the replacement base PreQ1. It depends on Zn(2+) as a cofactor.

It carries out the reaction 7-aminomethyl-7-carbaguanine + guanosine(34) in tRNA = 7-aminomethyl-7-carbaguanosine(34) in tRNA + guanine. It participates in tRNA modification; tRNA-queuosine biosynthesis. Functionally, catalyzes the base-exchange of a guanine (G) residue with the queuine precursor 7-aminomethyl-7-deazaguanine (PreQ1) at position 34 (anticodon wobble position) in tRNAs with GU(N) anticodons (tRNA-Asp, -Asn, -His and -Tyr). Catalysis occurs through a double-displacement mechanism. The nucleophile active site attacks the C1' of nucleotide 34 to detach the guanine base from the RNA, forming a covalent enzyme-RNA intermediate. The proton acceptor active site deprotonates the incoming PreQ1, allowing a nucleophilic attack on the C1' of the ribose to form the product. After dissociation, two additional enzymatic reactions on the tRNA convert PreQ1 to queuine (Q), resulting in the hypermodified nucleoside queuosine (7-(((4,5-cis-dihydroxy-2-cyclopenten-1-yl)amino)methyl)-7-deazaguanosine). In Caldanaerobacter subterraneus subsp. tengcongensis (strain DSM 15242 / JCM 11007 / NBRC 100824 / MB4) (Thermoanaerobacter tengcongensis), this protein is Queuine tRNA-ribosyltransferase.